Consider the following 302-residue polypeptide: Glycine--tRNA ligase alpha subunit (302 aa).

It belongs to the class-II aminoacyl-tRNA synthetase family. In terms of assembly, tetramer of two alpha and two beta subunits.

Its subcellular location is the cytoplasm. It carries out the reaction tRNA(Gly) + glycine + ATP = glycyl-tRNA(Gly) + AMP + diphosphate. The sequence is that of Glycine--tRNA ligase alpha subunit from Xanthomonas axonopodis pv. citri (strain 306).